A 631-amino-acid chain; its full sequence is Probable protein phosphatase 2C 31 (631 aa).

Disordered stretches follow at residues 119–142 (GPLH…SDRF) and 205–231 (LSGR…PKGN). The span at 131 to 140 (ASGSASTASD) shows a compositional bias: polar residues. One can recognise a PPM-type phosphatase domain in the interval 221–622 (DGDYRSTPKG…DDVSIIVMSF (402 aa)). Mn(2+)-binding residues include Asp-261 and Gly-262. The tract at residues 324–347 (GGDDDPDAERKAKRGRIERNADDD) is disordered. Mn(2+)-binding residues include Asp-550 and Asp-613.

This sequence belongs to the PP2C family. Mg(2+) serves as cofactor. It depends on Mn(2+) as a cofactor.

The catalysed reaction is O-phospho-L-seryl-[protein] + H2O = L-seryl-[protein] + phosphate. The enzyme catalyses O-phospho-L-threonyl-[protein] + H2O = L-threonyl-[protein] + phosphate. This is Probable protein phosphatase 2C 31 from Oryza sativa subsp. japonica (Rice).